Reading from the N-terminus, the 208-residue chain is FMN-dependent NADH:quinone oxidoreductase (208 aa).

99 to 102 contacts FMN; that stretch reads MWNF.

It belongs to the azoreductase type 1 family. As to quaternary structure, homodimer. It depends on FMN as a cofactor.

It carries out the reaction 2 a quinone + NADH + H(+) = 2 a 1,4-benzosemiquinone + NAD(+). The catalysed reaction is N,N-dimethyl-1,4-phenylenediamine + anthranilate + 2 NAD(+) = 2-(4-dimethylaminophenyl)diazenylbenzoate + 2 NADH + 2 H(+). In terms of biological role, quinone reductase that provides resistance to thiol-specific stress caused by electrophilic quinones. Functionally, also exhibits azoreductase activity. Catalyzes the reductive cleavage of the azo bond in aromatic azo compounds to the corresponding amines. This Brevibacillus brevis (strain 47 / JCM 6285 / NBRC 100599) protein is FMN-dependent NADH:quinone oxidoreductase.